An 86-amino-acid polypeptide reads, in one-letter code: Small ribosomal subunit protein bS20 (86 aa).

The protein belongs to the bacterial ribosomal protein bS20 family.

Binds directly to 16S ribosomal RNA. The sequence is that of Small ribosomal subunit protein bS20 from Buchnera aphidicola subsp. Cinara cedri (strain Cc).